Here is a 332-residue protein sequence, read N- to C-terminus: MRATVLGAGSWGTALASLLAGKGYTVTSWDKDAAVLDDIARNHRNERYLPGLQLPPTLHASGEVAKALEGAELVVLAVPSHAVRPVVIEAKRHVHAGTPIVCVAKGIELDTLMTMTEVVEDVLPVPLHPYLAVLSGPSFAKEVAKGLPTAVTVAARWERIAKQVQDAFHTKTFRPYTSGDVVGCEVGGCVKNVVAIAAGISDGMGFGANAMAALVTRGLAEITRLAVRKGANPLTLSGLAGLGDLVLTCSSDLSRNRTVGRGLAAGKTADAIQRELGQVAEGVRNARSARELAKRLGVDMPITEAIYRVLYEGLAPREAVTALMMRETKPEL.

4 residues coordinate NADPH: Ser-10, Trp-11, Lys-31, and Lys-105. Sn-glycerol 3-phosphate contacts are provided by Lys-105, Gly-136, and Ser-138. An NADPH-binding site is contributed by Ala-140. Sn-glycerol 3-phosphate-binding residues include Lys-191, Asp-244, Ser-254, Arg-255, and Asn-256. Catalysis depends on Lys-191, which acts as the Proton acceptor. Arg-255 serves as a coordination point for NADPH. NADPH is bound by residues Val-279 and Glu-281.

This sequence belongs to the NAD-dependent glycerol-3-phosphate dehydrogenase family.

The protein localises to the cytoplasm. The enzyme catalyses sn-glycerol 3-phosphate + NAD(+) = dihydroxyacetone phosphate + NADH + H(+). The catalysed reaction is sn-glycerol 3-phosphate + NADP(+) = dihydroxyacetone phosphate + NADPH + H(+). It participates in membrane lipid metabolism; glycerophospholipid metabolism. Its function is as follows. Catalyzes the reduction of the glycolytic intermediate dihydroxyacetone phosphate (DHAP) to sn-glycerol 3-phosphate (G3P), the key precursor for phospholipid synthesis. This Anaeromyxobacter sp. (strain K) protein is Glycerol-3-phosphate dehydrogenase [NAD(P)+].